An 860-amino-acid chain; its full sequence is Pentatricopeptide repeat-containing protein At2g40720 (860 aa).

PPR repeat units lie at residues 59–93, 94–124, 132–166, 167–203, 204–234, 236–270, 271–305, 306–340, 341–371, 372–406, 407–437, 438–472, 475–509, 510–540, 541–575, 576–610, 611–641, 642–676, 677–707, and 713–743; these read SVFTFPSLLKACSALTNLSYGKTIHGSVVVLGWRY, DPFIATSLVNMYVKCGFLDYAVQVFDGWSQS, DVTVWNSMIDGYFKFRRFKEGVGCFRRMLVFGVRP, DAFSLSIVVSVMCKEGNFRREEGKQIHGFMLRNSLDT, DSFLKTALIDMYFKFGLSIDAWRVFVEIEDK, NVVLWNVMIVGFGGSGICESSLDLYMLAKNNSVKL, VSTSFTGALGACSQSENSGFGRQIHCDVVKMGLHN, DPYVCTSLLSMYSKCGMVGEAETVFSCVVDKRLEI, WNAMVAAYAENDYGYSALDLFGFMRQKSVLP, DSFTLSNVISCCSVLGLYNYGKSVHAELFKRPIQS, TSTIESALLTLYSKCGCDPDAYLVFKSMEEK, DMVAWGSLISGLCKNGKFKEALKVFGDMKDDDDSL, DSDIMTSVTNACAGLEALRFGLQVHGSMIKTGLVL, NVFVGSSLIDLYSKCGLPEMALKVFTSMSTE, NMVAWNSMISCYSRNNLPELSIDLFNLMLSQGIFP, DSVSITSVLVAISSTASLLKGKSLHGYTLRLGIPS, DTHLKNALIDMYVKCGFSKYAENIFKKMQHK, SLITWNLMIYGYGSHGDCITALSLFDEMKKAGESP, DDVTFLSLISACNHSGFVEEGKNIFEFMKQD, and NMEHYANMVDLLGRAGLLEEAYSFIKAMPIE. The interval 748–823 is type E motif; sequence IWLCLLSASR…QPGCSWIEVS (76 aa). The interval 824 to 854 is type E(+) motif; it reads DRTNVFFSGGSSSPMKAEIFNVLNRLKSNMV.

The protein belongs to the PPR family. PCMP-E subfamily.

This chain is Pentatricopeptide repeat-containing protein At2g40720 (PCMP-E26), found in Arabidopsis thaliana (Mouse-ear cress).